Consider the following 96-residue polypeptide: MINDILTEDRRLVILRSLMDCNNEANESILQDCLDAYGHNVSRDVVRGQIDWLAEQQLVTVENLRGFYVVTLTSRGQDVAEGRARVAGVKRPRPRA.

The protein resides in the host cytoplasm. This is an uncharacterized protein from Escherichia phage Mu (Bacteriophage Mu).